The sequence spans 230 residues: Thymidylate kinase (230 aa).

Residue 20–27 coordinates ATP; that stretch reads GGEGSGKS.

It belongs to the thymidylate kinase family.

It carries out the reaction dTMP + ATP = dTDP + ADP. In terms of biological role, phosphorylation of dTMP to form dTDP in both de novo and salvage pathways of dTTP synthesis. This Nitrobacter hamburgensis (strain DSM 10229 / NCIMB 13809 / X14) protein is Thymidylate kinase.